A 236-amino-acid chain; its full sequence is DNA repair and recombination protein RadB (236 aa).

The protein belongs to the eukaryotic RecA-like protein family. RadB subfamily.

Its function is as follows. Involved in DNA repair and in homologous recombination. May regulate the cleavage reactions of the branch-structured DNA. Has a very weak ATPase activity that is not stimulated by DNA. Binds DNA but does not promote DNA strands exchange. The chain is DNA repair and recombination protein RadB from Halobacterium salinarum (strain ATCC 29341 / DSM 671 / R1).